Consider the following 184-residue polypeptide: Photosystem I assembly protein Ycf4 (184 aa).

2 helical membrane-spanning segments follow: residues 22–42 and 57–77; these read FCWAIILFLGSLGFLLVGTSS and IVFFPQGIVMSFYGIAGLFIS.

This sequence belongs to the Ycf4 family.

The protein resides in the plastid. It localises to the chloroplast thylakoid membrane. Functionally, seems to be required for the assembly of the photosystem I complex. In Helianthus annuus (Common sunflower), this protein is Photosystem I assembly protein Ycf4.